We begin with the raw amino-acid sequence, 193 residues long: Penicillin-binding protein activator LpoB (193 aa).

The N-terminal stretch at 1–16 (MKKYLGVILAALVLTG) is a signal peptide. Cys17 is lipidated: N-palmitoyl cysteine. Cys17 carries the S-diacylglycerol cysteine lipid modification. Residues 17 to 55 (CPSRPPEPTEPPATIEPVEPQVPTTPTLPPGESVPQPPK) form a disordered region. Positions 28–41 (PATIEPVEPQVPTT) are enriched in low complexity.

Belongs to the LpoB family. In terms of assembly, interacts with PBP1b.

The protein resides in the cell outer membrane. Regulator of peptidoglycan synthesis that is essential for the function of penicillin-binding protein 1B (PBP1b). This chain is Penicillin-binding protein activator LpoB, found in Pectobacterium carotovorum subsp. carotovorum (strain PC1).